The primary structure comprises 467 residues: Probable tryptophanase (467 aa).

N6-(pyridoxal phosphate)lysine is present on K263.

The protein belongs to the beta-eliminating lyase family. Pyridoxal 5'-phosphate is required as a cofactor.

It carries out the reaction L-tryptophan + H2O = indole + pyruvate + NH4(+). It functions in the pathway amino-acid degradation; L-tryptophan degradation via pyruvate pathway; indole and pyruvate from L-tryptophan: step 1/1. The sequence is that of Probable tryptophanase (tnaA) from Aeropyrum pernix (strain ATCC 700893 / DSM 11879 / JCM 9820 / NBRC 100138 / K1).